The sequence spans 244 residues: Deoxynucleotide monophosphate kinase (244 aa).

Lys10 serves as a coordination point for dGMP. Residues Arg11, Gly13, Asp15, and Thr16 each coordinate ATP. Residues Ile36, Lys37, Arg70, Arg137, Gly144, Thr145, Val149, Trp157, Asp180, Arg182, Gln183, Glu186, and Thr213 each coordinate dGMP.

The protein belongs to the dNMP kinase family. As to quaternary structure, homodimer. It depends on Mg(2+) as a cofactor.

It catalyses the reaction dTMP + ATP = dTDP + ADP. The catalysed reaction is dGMP + ATP = dGDP + ADP. The enzyme catalyses 5-hydroxymethyl-dCMP + ATP = 5-hydroxymethyl-dCDP + ADP. Allows the synthesis of deoxyribonucleoside triphosphates necessary for the rapid viral DNA replication. Phosphorylates dGMP, dTMP and 5-hydroxymethyl-dCMP (hmdCMP) while excluding dCMP and dAMP. The phosphorylation of 5-hydroxymethyl-dCMP represents the first step in the replacement of cytosine by hydroxymethylcytosine in new viral DNA genomes. The sequence is that of Deoxynucleotide monophosphate kinase (1) from Escherichia phage RB69 (Bacteriophage RB69).